We begin with the raw amino-acid sequence, 247 residues long: Cell division protein ZapD (247 aa).

It belongs to the ZapD family. In terms of assembly, interacts with FtsZ.

It localises to the cytoplasm. Functionally, cell division factor that enhances FtsZ-ring assembly. Directly interacts with FtsZ and promotes bundling of FtsZ protofilaments, with a reduction in FtsZ GTPase activity. The polypeptide is Cell division protein ZapD (Salmonella dublin (strain CT_02021853)).